The sequence spans 950 residues: Oxysterol-binding protein-related protein 1 (950 aa).

An interaction with RAB7A region spans residues 1–237; sequence MNTEAEQQLL…NKVVHKALKR (237 aa). 3 ANK repeats span residues 47 to 76, 80 to 109, and 175 to 204; these read LGWT…KVNM, MGDT…DTTV, and LGNT…DPSL. A PH domain is found at 235 to 334; sequence LKRFEGPLWK…WLEAIEEHSA (100 aa). The stretch at 430-463 forms a coiled coil; that stretch reads NFKLEQEQEKNKILSEALETLATEHHELERSLVE. Positions 469 to 483 match the FFAT motif; it reads SILSEDEFYDALSGS. 2 disordered regions span residues 795–821 and 881–913; these read KKNT…VPDS and MENG…SEED. Residues 877-913 adopt a coiled-coil conformation; that stretch reads DIRAMENGEIDQASEEKKRLEEKQRAARKNRSKSEED. The segment covering 890–901 has biased composition (basic and acidic residues); that stretch reads SEEKKRLEEKQR.

Belongs to the OSBP family. Interacts (via FFAT motif) with VAPA. Interacts (via FFAT motif) with VAPB. Interacts with the GTP-bound form of RAB7A. Interacts with OAS1B. Interacts (via FFAT motif) with MOSPD2 (via MSP domain). In terms of tissue distribution, detected in prostate and liver.

The protein resides in the late endosome. In terms of biological role, binds phospholipids; exhibits strong binding to phosphatidic acid and weak binding to phosphatidylinositol 3-phosphate. Stabilizes GTP-bound RAB7A on late endosomes/lysosomes and alters functional properties of late endocytic compartments via its interaction with RAB7A. Binds 25-hydroxycholesterol and cholesterol. This is Oxysterol-binding protein-related protein 1 from Rattus norvegicus (Rat).